The primary structure comprises 333 residues: Peroxisome biogenesis protein 2 (333 aa).

Residues 1–38 lie on the Peroxisomal matrix side of the membrane; it reads MTPSTPADDAWIRSYQRLLPESQSLLASRRSVIPVAIS. A helical transmembrane segment spans residues 39 to 65; the sequence is RVNQFDAARLDVEMSAMLKEQLVKVFT. Topologically, residues 66–71 are cytoplasmic; the sequence is LMKPGM. Residues 72 to 97 traverse the membrane as a helical segment; the sequence is LFQYEPELDAFLEFLIWRFSIWVDKP. The Peroxisomal matrix segment spans residues 98 to 131; that stretch reads TPGNALMNLRYRDERGVVAQHLGKVRTGLEGPGL. A helical transmembrane segment spans residues 132 to 158; the sequence is TSPQKIWYCVASVGGQYLFSRLQSFSA. Residues 159–168 lie on the Cytoplasmic side of the membrane; sequence FRRWGDSEQR. The helical transmembrane segment at 169–199 threads the bilayer; that stretch reads PLARRLWTLVQRIEGIYKAASFLNLLSFLYT. Topologically, residues 200–226 are peroxisomal matrix; the sequence is GRYRNLIEKALKARLVYRSPHMNRSVS. A helical transmembrane segment spans residues 227 to 250; that stretch reads FEYMNRQLVWNEFSEMLLLLLPLL. Residues 251-333 are Cytoplasmic-facing; sequence NSSAVKNILS…IQREGVSSGK (83 aa). Cys277, Cys280, Cys293, His295, Cys298, Cys301, Cys314, and Cys317 together coordinate Zn(2+). An RING-type zinc finger spans residues 277–318; that stretch reads CPICQVDPAIPFIALPCQHRYCYYCIRTRCASAASFRCLRCN.

Belongs to the pex2/pex10/pex12 family. As to quaternary structure, component of the PEX2-PEX10-PEX12 retrotranslocation channel. Interacts with DSK2a and DSK2b. As to expression, expressed in roots, stems, leaves, flowers, pollen, ovules, seeds and siliques.

The protein localises to the peroxisome membrane. The catalysed reaction is [E2 ubiquitin-conjugating enzyme]-S-ubiquitinyl-L-cysteine + [acceptor protein]-L-cysteine = [E2 ubiquitin-conjugating enzyme]-L-cysteine + [acceptor protein]-S-ubiquitinyl-L-cysteine.. It participates in protein modification; protein ubiquitination. In terms of biological role, E3 ubiquitin-protein ligase component of a retrotranslocation channel required for peroxisome organization by mediating export of the PEX5 receptor from peroxisomes to the cytosol, thereby promoting PEX5 recycling. The retrotranslocation channel is composed of PEX2, PEX10 and PEX12; each subunit contributing transmembrane segments that coassemble into an open channel that specifically allows the passage of PEX5 through the peroxisomal membrane. PEX2 also regulates peroxisome organization by acting as a E3 ubiquitin-protein ligase. PEX2 ubiquitinates PEX5 during its passage through the retrotranslocation channel: catalyzes monoubiquitination of PEX5 at 'Cys-6', a modification that acts as a signal for PEX5 extraction into the cytosol. The chain is Peroxisome biogenesis protein 2 (PEX2) from Arabidopsis thaliana (Mouse-ear cress).